The primary structure comprises 257 residues: Putative phosphatase YkrA (257 aa).

Asp9 functions as the Nucleophile in the catalytic mechanism. Position 9 (Asp9) interacts with Mg(2+). Ile10 contributes to the phosphate binding site. Residue Asp11 coordinates Mg(2+). Residues 43 to 44 (SG) and Lys183 each bind phosphate. Mg(2+) is bound at residue Asp206. Position 209 (Asn209) interacts with phosphate.

This sequence belongs to the HAD-like hydrolase superfamily. Cof family. It depends on Mg(2+) as a cofactor.

The polypeptide is Putative phosphatase YkrA (ykrA) (Bacillus subtilis (strain 168)).